The chain runs to 155 residues: Ribonuclease 2B (155 aa).

The N-terminal stretch at methionine 1–cysteine 25 is a signal peptide. The active-site Proton acceptor is the histidine 38. 4 disulfide bridges follow: cysteine 47–cysteine 106, cysteine 61–cysteine 118, cysteine 79–cysteine 133, and cysteine 86–cysteine 94. Lysine 62 to threonine 66 provides a ligand contact to substrate. An N-linked (GlcNAc...) asparagine glycan is attached at asparagine 114. The active-site Proton donor is histidine 150.

Belongs to the pancreatic ribonuclease family.

The enzyme catalyses an [RNA] containing cytidine + H2O = an [RNA]-3'-cytidine-3'-phosphate + a 5'-hydroxy-ribonucleotide-3'-[RNA].. It carries out the reaction an [RNA] containing uridine + H2O = an [RNA]-3'-uridine-3'-phosphate + a 5'-hydroxy-ribonucleotide-3'-[RNA].. This is a non-secretory ribonuclease. It is a pyrimidine specific nuclease with a slight preference for U. Cytotoxin and helminthotoxin. Possesses a wide variety of biological activities. This chain is Ribonuclease 2B, found in Mus musculus (Mouse).